A 108-amino-acid polypeptide reads, in one-letter code: Small ribosomal subunit protein uS17 (108 aa).

The disordered stretch occupies residues Met-1–Val-26. Low complexity predominate over residues Ala-8–Ser-17.

It belongs to the universal ribosomal protein uS17 family. In terms of assembly, part of the 30S ribosomal subunit.

One of the primary rRNA binding proteins, it binds specifically to the 5'-end of 16S ribosomal RNA. The protein is Small ribosomal subunit protein uS17 of Myxococcus xanthus (strain DK1622).